A 270-amino-acid polypeptide reads, in one-letter code: Molybdenum storage protein subunit beta (270 aa).

As to quaternary structure, octamer consisting of 4 alpha and 4 beta chains.

The protein resides in the cytoplasm. Functionally, intracellular storage of molybdenum. Binds polyoxomolybdates. Can bind at least 90 molybdenum atoms per protein molecule. The sequence is that of Molybdenum storage protein subunit beta from Azotobacter vinelandii (strain DJ / ATCC BAA-1303).